A 383-amino-acid polypeptide reads, in one-letter code: Protein dyf-4 (383 aa).

An N-terminal signal peptide occupies residues 1–16 (MKTIWLLLATCIHVFA). N-linked (GlcNAc...) asparagine glycosylation occurs at asparagine 64.

As to quaternary structure, interacts with daf-6. Expressed in sheath and socket glial cells in both the amphid and phasmid ciliated sensory neurons (at protein level).

The protein localises to the secreted. In terms of biological role, required for the localization of daf-6 to the socket glial channel and the sheath lumen. In association with daf-6, plays a role in dendrite extension and ciliogenesis to ensure the formation of glial channels in amphid and phasmid ciliated sensory neurons. The protein is Protein dyf-4 of Caenorhabditis elegans.